We begin with the raw amino-acid sequence, 770 residues long: U3 small nucleolar RNA-associated protein 14 homolog A (770 aa).

Polar residues predominate over residues 1-17 (MNANQAAESNLLASNQQ). Positions 1-65 (MNANQAAESN…GKDRQKLADR (65 aa)) are disordered. A phosphoserine mark is found at S30, S32, and S53. Residues 41–68 (ERKHQKLLESISSLNGKDRQKLADRSEA) adopt a coiled-coil conformation. Residues 56 to 65 (GKDRQKLADR) show a composition bias toward basic and acidic residues. S78 and S82 each carry phosphoserine. The residue at position 206 (T206) is a Phosphothreonine. Coiled-coil stretches lie at residues 217-291 (SLEE…DKAR) and 318-348 (LEARQAMQEQLARNKELTQKVRAASESEEEG). Disordered regions lie at residues 334-361 (LTQKVRAASESEEEGEGQEEEEEPLVPD), 392-455 (KDLE…SSQE), and 467-505 (LRTENHQSGKQELSSARTAQREEPAREEEEPMLLQRPER). 2 stretches are compositionally biased toward acidic residues: residues 343 to 358 (ESEEEGEGQEEEEEPL) and 396 to 410 (DPAEPEAQETSESEE). Phosphoserine is present on residues S406 and S408. Residues 411–444 (EKAVVEEETLLKEFEERRSLRQKSELNHMAEPVH) show a composition bias toward basic and acidic residues. K449 is covalently cross-linked (Glycyl lysine isopeptide (Lys-Gly) (interchain with G-Cter in SUMO2)). Position 453 is a phosphoserine (S453). Position 567 is a phosphoserine (S567). Position 588 is a citrulline (R588). A Glycyl lysine isopeptide (Lys-Gly) (interchain with G-Cter in SUMO2) cross-link involves residue K732.

It belongs to the UTP14 family. In terms of assembly, interacts with DHX37. Citrullinated by PADI4.

It localises to the nucleus. The protein localises to the nucleolus. In terms of biological role, may be required for ribosome biogenesis. The chain is U3 small nucleolar RNA-associated protein 14 homolog A (UTP14A) from Bos taurus (Bovine).